A 223-amino-acid polypeptide reads, in one-letter code: MPELQGKPLRFYLLRLTTTLPLTTYLNLWPRSLLPFSFTLWDPTTTGTEKRGLPRSYSQSERLCSSSLQKSSSELKSKIIMKKFFLFLVLPIFLFASPLKAVFDCAVGDLDWISLRLSLIKKTAEQLMEEGKSYRFVITIHSHCIKVVDADLKKFPESERRKIELIQSQLKTLKEMYSVDVKACQIAMNRGKIKKVPPFVETVPNSWITLIELQNKGFAFVPF.

This is an uncharacterized protein from Aquifex aeolicus (strain VF5).